The sequence spans 127 residues: Small ribosomal subunit protein uS8m (127 aa).

It belongs to the universal ribosomal protein uS8 family.

Its subcellular location is the mitochondrion. The polypeptide is Small ribosomal subunit protein uS8m (RPS8) (Acanthamoeba castellanii (Amoeba)).